The primary structure comprises 431 residues: ETS domain-containing protein Elk-4 (431 aa).

The segment at residues 5–85 (ITLWQFLLQL…NGQKFVYKFV (81 aa)) is a DNA-binding region (ETS). Residues 114 to 139 (SSSSKDVENGGKDKPPQPGAKTSSRN) are disordered. A compositionally biased stretch (basic and acidic residues) spans 118–128 (KDVENGGKDKP). A Glycyl lysine isopeptide (Lys-Gly) (interchain with G-Cter in SUMO2) cross-link involves residue lysine 167. Serine 180 is subject to Phosphoserine. Disordered regions lie at residues 251–282 (TTPPISSIPPLQEPPRTPSPPLSSHPDIDTDI), 294–323 (ENLSLEPKDQDSVLLEKDKVNNSSRSKKPK), and 411–431 (TLSGLDGPSTPGPFSPDLQKT). A compositionally biased stretch (pro residues) spans 261-273 (LQEPPRTPSPPLS). Residues 299–313 (EPKDQDSVLLEKDKV) show a composition bias toward basic and acidic residues.

The protein belongs to the ETS family. As to quaternary structure, interacts with SIRT7.

The protein resides in the nucleus. Functionally, involved in both transcriptional activation and repression. Interaction with SIRT7 leads to recruitment and stabilization of SIRT7 at promoters, followed by deacetylation of histone H3 at 'Lys-18' (H3K18Ac) and subsequent transcription repression. Forms a ternary complex with the serum response factor (SRF). Requires DNA-bound SRF for ternary complex formation and makes extensive DNA contacts to the 5'side of SRF, but does not bind DNA autonomously. This Homo sapiens (Human) protein is ETS domain-containing protein Elk-4 (ELK4).